The chain runs to 462 residues: MSSVKRNPKKEMISELHSSAAEGNVAKLAGILSHSPSLLNETSENGWTALMYAARNGHPDVVQFLLEKGCDRSLVNKARQTALDIAAFWGYRHIANLLANAKGGKKPWFLTNEVDECENYFSRTLLDRRSDKRNNSDWLQAKESHPTTVYLLFSDLNPLVTLGGNKESSQQPEVRLCQLNYPDVKGYLAQPEKITLVFLGVELEMRKGSPAQAGGVPEEEEDGLVAWFALGIEPGAAEEFKQRHENCYFLHPPMPALLQLKEKEAGVVAQARSVLAWHSRYKFCPTCGSATKIEEGGYKRVCVRETCPSLQGVHNTSYPRVDPVVIMQVIHPDGTKCLLGRQKRFPPGMFTCLAGFIEPGETIEDAVRREVEEESGVKVGHVQYVSCQPWPMPSSLMIGCLAVAVSTEIKVDKNEIEDARWFTREQVVDVLTKGKQQAFFVPPSRAIAHQLIKHWVGMNPNL.

Lysine 10 is subject to N6-succinyllysine. 3 ANK repeats span residues 11–40 (EMIS…SLLN), 45–74 (NGWT…DRSL), and 78–98 (ARQT…ANLL). Lysine 185 is modified (N6-succinyllysine). Residues cysteine 284 and cysteine 287 each contribute to the Zn(2+) site. The residue at position 292 (lysine 292) is an N6-succinyllysine. Zn(2+) contacts are provided by cysteine 302 and cysteine 307. Substrate is bound by residues tyrosine 318, 354–356 (AGF), glutamate 370, glutamate 374, and glutamate 415. Residues 319–453 (PRVDPVVIMQ…SRAIAHQLIK (135 aa)) form the Nudix hydrolase domain. Residues alanine 354, glutamate 370, glutamate 374, and glutamate 415 each coordinate Mg(2+). The short motif at 355–376 (GFIEPGETIEDAVRREVEEESG) is the Nudix box element. The Microbody targeting signal signature appears at 460–462 (PNL).

Belongs to the Nudix hydrolase family. NudC subfamily. In terms of assembly, homodimer. Homodimerization is essential for its catalytic activity and protein stability. Interacts (via ANK repeats) with BLMH. The cofactor is Mg(2+). Zn(2+) serves as cofactor. As to expression, expressed abundantly in the liver and kidney.

It is found in the cytoplasm. The protein resides in the peroxisome. The protein localises to the cytoplasmic granule. The catalysed reaction is a 5'-end NAD(+)-phospho-ribonucleoside in mRNA + H2O = a 5'-end phospho-adenosine-phospho-ribonucleoside in mRNA + beta-nicotinamide D-ribonucleotide + 2 H(+). It catalyses the reaction NAD(+) + H2O = beta-nicotinamide D-ribonucleotide + AMP + 2 H(+). It carries out the reaction NADH + H2O = reduced beta-nicotinamide D-ribonucleotide + AMP + 2 H(+). The enzyme catalyses NADPH + H2O = reduced beta-nicotinamide D-ribonucleotide + adenosine 2',5'-bisphosphate + 2 H(+). Its function is as follows. mRNA decapping enzyme that specifically removes the nicotinamide adenine dinucleotide (NAD) cap from a subset of mRNAs by hydrolyzing the diphosphate linkage to produce nicotinamide mononucleotide (NMN) and 5' monophosphate mRNA. The NAD-cap is present at the 5'-end of some RNAs; in contrast to the canonical N7 methylguanosine (m7G) cap, the NAD cap promotes mRNA decay. Preferentially acts on NAD-capped transcripts in response to nutrient stress. Also acts on free nicotinamide adenine dinucleotide molecules: hydrolyzes NAD(H) into NMN(H) and AMP, and NADPH into NMNH and 2',5'-ADP. May act to regulate the concentration of peroxisomal nicotinamide nucleotide cofactors required for oxidative metabolism in this organelle. Regulates the levels of circadian clock components PER1, PER2, PER3 and CRY2 in the liver. In Mus musculus (Mouse), this protein is NAD-capped RNA hydrolase NUDT12.